Consider the following 447-residue polypeptide: Probable alpha-galactosidase B (447 aa).

Residues 1-22 form the signal peptide; sequence MTTFLSLTTAAAVLTLARGSNA. Intrachain disulfides connect cysteine 45–cysteine 77 and cysteine 127–cysteine 157. Residue aspartate 155 is the Nucleophile of the active site. Residues asparagine 162 and asparagine 180 are each glycosylated (N-linked (GlcNAc...) asparagine). Substrate is bound at residue 225-229; it reads NWGQA. Residue asparagine 236 is glycosylated (N-linked (GlcNAc...) asparagine). Aspartate 247 acts as the Proton donor in catalysis. The N-linked (GlcNAc...) asparagine glycan is linked to asparagine 286.

It belongs to the glycosyl hydrolase 27 family.

It is found in the secreted. The enzyme catalyses Hydrolysis of terminal, non-reducing alpha-D-galactose residues in alpha-D-galactosides, including galactose oligosaccharides, galactomannans and galactolipids.. Hydrolyzes a variety of simple alpha-D-galactoside as well as more complex molecules such as oligosaccharides and polysaccharides. This is Probable alpha-galactosidase B (aglB) from Neosartorya fischeri (strain ATCC 1020 / DSM 3700 / CBS 544.65 / FGSC A1164 / JCM 1740 / NRRL 181 / WB 181) (Aspergillus fischerianus).